A 251-amino-acid chain; its full sequence is uncharacterized protein (251 aa).

The next 4 helical transmembrane spans lie at 56-76 (LAVVIAQLTIGVLGNSLTLVA), 104-124 (IITVGITNVILFLLFVAFLLT), 184-204 (HGFVYHFIAYFVLVSSLLIIV), and 208-228 (YLIADVITTYATSLLILANIS).

The protein localises to the membrane. This is an uncharacterized protein from Caenorhabditis elegans.